Consider the following 247-residue polypeptide: Adenosylcobinamide-GDP ribazoletransferase (247 aa).

A run of 5 helical transmembrane segments spans residues I34–L54, C59–F79, G113–L133, M138–Y158, and L187–V207.

This sequence belongs to the CobS family. The cofactor is Mg(2+).

The protein resides in the cell inner membrane. The enzyme catalyses alpha-ribazole + adenosylcob(III)inamide-GDP = adenosylcob(III)alamin + GMP + H(+). The catalysed reaction is alpha-ribazole 5'-phosphate + adenosylcob(III)inamide-GDP = adenosylcob(III)alamin 5'-phosphate + GMP + H(+). The protein operates within cofactor biosynthesis; adenosylcobalamin biosynthesis; adenosylcobalamin from cob(II)yrinate a,c-diamide: step 7/7. Its function is as follows. Joins adenosylcobinamide-GDP and alpha-ribazole to generate adenosylcobalamin (Ado-cobalamin). Also synthesizes adenosylcobalamin 5'-phosphate from adenosylcobinamide-GDP and alpha-ribazole 5'-phosphate. The polypeptide is Adenosylcobinamide-GDP ribazoletransferase (Salmonella dublin (strain CT_02021853)).